Reading from the N-terminus, the 1289-residue chain is MNEKIQRINFGKIREGLSLPNLIEHQTKSYADFLQLSVAPQERKAEGLHGVFLEVFPIESYDGKVKLEYVNYEIGESKFSPIDCLRDGKTYAAPLYVTFRLKDEEGVKEEKVYMGELPMMTPQGSFIINGAERVIVNQLHRSPGICFESSFHSNGKTLYSFRIIPDRGSWLEVAFDTNDLLYVYLDRRKKRRKFLITTLLRALAAALSGPSSPLGSGGDEEIIRLFYTVEELNLSEGIDEDKVATKVLVSEVKDPHNPDVVLARAYEPVTRSVVRQLLDVGIQSISVVDVQYDDTLIKCLKKDPTKDPVEALKEIYRRLRPGDPPTESNAKLLLKRLLLDPKRYDLGRVGRYKLNQKLNIQVDPDIRILTWEDLVAATRYLIKLRKGEGITDDIDHLGSRRVRTVGELVANQCRMGLARTERLVKERMTLFDVNTEGMTPQKLINPKALSATIRDFFARSQLSQLMDQINPLSELTHKRRLSALGPGGLSRERAGFEVRDVHPSHYGRICPIETPEGPNIGLIATMASYSRFNDYGILETPYRKVLNGKVTNEIVYFTADQEENYVIAMANTAVSEDGTILDQRVAVRFRREFMEVEREKVEYMDVSPKQIVSVAAGLIPFLEHDDANRALMGSNMQRQAVPLIQPEAPIVGTGIEERVARDIQAVIVSEVDGTVSSVTGKEIIVTPTGSPVEQKKKKSKQGSEREGIVYKLNKFMRSNAGTCINQKPIVKKGQVVKKGDVLADGPSTQNGELALGRNLLVAFMPWNGYNFEDAIIVSERVVKEDLFTSIYIDEFEIVARDTKLGPEEITRDIPNVGDEALKNLGPDGIIRVGAEVKPGDILVGKITPKSETELAPEERLLRAIFGEKAADVKDSSLRVPSGTYGIVMDVRVSSGTARVRKEKINASEAKQKIKEIEERYDQKEEELREELTQALSNILLNEKIPLDVVNVETGEIIIPANRKITKVLLRKMAQAYDKIEIDPSPIRSKIFEIIGNFEAKFEQLRNDRELELDQIESGEDTEPGIIKQVKVFIANKRKLSVGDKMAGRHGNKGVVSKIVPVEDMPYLPDGTPVDIVLNPLGVPSRMNVGQVLETHLGIAAKKLGFNVATPVFDGVKEEKIREFLVKAGMDEDGKSILYDGRTGEMFNQRVVVGMIYMMKLNHMVADKIHARAVGPYSLVTQQPLGGKAQYGGQRFGEMEVWAMEAYGAAYILQELLTVKSDDVQGRTRIYESIVKGENYLETTTPESFNVLIKELQGLCLEVNIGQRSDVIGLSVKPTTPKALSGGEAA.

This sequence belongs to the RNA polymerase beta chain family. As to quaternary structure, the RNAP catalytic core consists of 2 alpha, 1 beta, 1 beta' and 1 omega subunit. When a sigma factor is associated with the core the holoenzyme is formed, which can initiate transcription.

It carries out the reaction RNA(n) + a ribonucleoside 5'-triphosphate = RNA(n+1) + diphosphate. DNA-dependent RNA polymerase catalyzes the transcription of DNA into RNA using the four ribonucleoside triphosphates as substrates. The polypeptide is DNA-directed RNA polymerase subunit beta (Methylacidiphilum infernorum (isolate V4) (Methylokorus infernorum (strain V4))).